We begin with the raw amino-acid sequence, 255 residues long: 1-(5-phosphoribosyl)-5-[(5-phosphoribosylamino)methylideneamino] imidazole-4-carboxamide isomerase (255 aa).

Catalysis depends on aspartate 8, which acts as the Proton acceptor. Aspartate 129 (proton donor) is an active-site residue.

This sequence belongs to the HisA/HisF family.

The protein resides in the cytoplasm. The catalysed reaction is 1-(5-phospho-beta-D-ribosyl)-5-[(5-phospho-beta-D-ribosylamino)methylideneamino]imidazole-4-carboxamide = 5-[(5-phospho-1-deoxy-D-ribulos-1-ylimino)methylamino]-1-(5-phospho-beta-D-ribosyl)imidazole-4-carboxamide. It functions in the pathway amino-acid biosynthesis; L-histidine biosynthesis; L-histidine from 5-phospho-alpha-D-ribose 1-diphosphate: step 4/9. The polypeptide is 1-(5-phosphoribosyl)-5-[(5-phosphoribosylamino)methylideneamino] imidazole-4-carboxamide isomerase (Prochlorococcus marinus (strain MIT 9303)).